A 318-amino-acid polypeptide reads, in one-letter code: MSEEGPQVKIREASKDNVDFILSNVDLAMANSLRRVMIAEIPTLAIDSVEVETNTTVLADEFIAHRLGLIPLQSMDIEQLEYSRDCFCEDHCDKCSVVLTLQAFGESESTTNVYSKDLVIVSNLMGRNIGHPIIQDKEGNGVLICKLRKGQELKLTCVAKKGIAKEHAKWGPAAAIEFEYDPWNKLKHTDYWYEQDSAKEWPQSKNCEYEDPPNEGDPFDYKAQADTFYMNVESVGSIPVDQVVVRGIDTLQKKVASILLALTQMDQDKVNFASGDNNTASNMLGSNEDVMMTGAEQDPYSNASQMGNTGSGGYDNAW.

Position 2 is an N-acetylserine (Ser-2). Cys-86, Cys-88, Cys-92, and Cys-95 together coordinate Zn(2+). The segment at 297–318 (QDPYSNASQMGNTGSGGYDNAW) is disordered. Positions 299–308 (PYSNASQMGN) are enriched in polar residues. Over residues 309–318 (TGSGGYDNAW) the composition is skewed to gly residues.

The protein belongs to the archaeal Rpo3/eukaryotic RPB3 RNA polymerase subunit family. Component of the RNA polymerase II (Pol II) complex consisting of 12 subunits.

The protein resides in the nucleus. Its function is as follows. DNA-dependent RNA polymerase catalyzes the transcription of DNA into RNA using the four ribonucleoside triphosphates as substrates. Component of RNA polymerase II which synthesizes mRNA precursors and many functional non-coding RNAs. Pol II is the central component of the basal RNA polymerase II transcription machinery. It is composed of mobile elements that move relative to each other. RPB3 is part of the core element with the central large cleft and the clamp element that moves to open and close the cleft. Seems to be involved in transcription termination. The sequence is that of DNA-directed RNA polymerase II subunit RPB3 (RPB3) from Saccharomyces cerevisiae (strain ATCC 204508 / S288c) (Baker's yeast).